Here is a 77-residue protein sequence, read N- to C-terminus: MQVLVRDNNVDQALRALKKKMQREGIFREMKMRGYYEKPSEKRAREKAEAIRRTRKLARKRAQREGIVSNGRTASVR.

Positions 38 to 52 are enriched in basic and acidic residues; sequence KPSEKRAREKAEAIR. Residues 38-77 form a disordered region; it reads KPSEKRAREKAEAIRRTRKLARKRAQREGIVSNGRTASVR. Residues 53–62 are compositionally biased toward basic residues; sequence RTRKLARKRA.

Belongs to the bacterial ribosomal protein bS21 family.

This is Small ribosomal subunit protein bS21 from Bartonella bacilliformis (strain ATCC 35685 / KC583 / Herrer 020/F12,63).